Consider the following 68-residue polypeptide: Riparin-1.6 (68 aa).

Residues 1–15 form the signal peptide; sequence MKIIVFLAVLMLVSA. A propeptide spanning residues 16–41 is cleaved from the precursor; that stretch reads QVCLVSAAEMEHSSDNELSSRDLVKR. Cys47 and Cys53 are oxidised to a cystine. Cys53 bears the Cysteine amide mark. The propeptide occupies 57–68; sequence DIESSEGANGGE.

In terms of tissue distribution, expressed by the skin glands.

The protein localises to the secreted. This is Riparin-1.6 from Crinia riparia (Streambank froglet).